A 235-amino-acid polypeptide reads, in one-letter code: MDKENLISLEKILGFNFNNPSILLSAITHPSYAFEHPEEGIEHNERLEFLGDAVLELFISDYLFRTFPQKSEGDLTKLRSRLVCAESLYELAFKINLDKFLRLGKGEFKAGGNQRMSNLANAVEAVIGAVYFDCGIEAAFSFITRLYGEKLKPENLEQLPKDEKTTLQELLQKEKNNVLRYEILLEEGPPHQKIFTAGVIINDKLIATGRGKSKKEAEQEAAKKALELLKNEKEV.

In terms of domain architecture, RNase III spans 6-135; sequence LISLEKILGF…VIGAVYFDCG (130 aa). A Mg(2+)-binding site is contributed by Glu48. Residue Asp52 is part of the active site. Asn121 and Glu124 together coordinate Mg(2+). Glu124 is an active-site residue. Residues 162 to 231 form the DRBM domain; the sequence is DEKTTLQELL…AKKALELLKN (70 aa).

Belongs to the ribonuclease III family. Homodimer. Mg(2+) is required as a cofactor.

Its subcellular location is the cytoplasm. The catalysed reaction is Endonucleolytic cleavage to 5'-phosphomonoester.. In terms of biological role, digests double-stranded RNA. Involved in the processing of primary rRNA transcript to yield the immediate precursors to the large and small rRNAs (23S and 16S). Processes some mRNAs, and tRNAs when they are encoded in the rRNA operon. Processes pre-crRNA and tracrRNA of type II CRISPR loci if present in the organism. The protein is Ribonuclease 3 of Carboxydothermus hydrogenoformans (strain ATCC BAA-161 / DSM 6008 / Z-2901).